The sequence spans 127 residues: Large ribosomal subunit protein bL20 (127 aa).

Belongs to the bacterial ribosomal protein bL20 family.

In terms of biological role, binds directly to 23S ribosomal RNA and is necessary for the in vitro assembly process of the 50S ribosomal subunit. It is not involved in the protein synthesizing functions of that subunit. In Corynebacterium diphtheriae (strain ATCC 700971 / NCTC 13129 / Biotype gravis), this protein is Large ribosomal subunit protein bL20.